The primary structure comprises 776 residues: 5-methyltetrahydropteroyltriglutamate--homocysteine methyltransferase (776 aa).

Residues 13-16 (RELK) and K127 each bind 5-methyltetrahydropteroyltri-L-glutamate. L-homocysteine-binding positions include 450–452 (IGS) and E503. L-methionine-binding positions include 450-452 (IGS) and E503. W580 serves as a coordination point for 5-methyltetrahydropteroyltri-L-glutamate. D618 provides a ligand contact to L-homocysteine. D618 is an L-methionine binding site. Residue E624 coordinates 5-methyltetrahydropteroyltri-L-glutamate. The Zn(2+) site is built by H660, C662, and E684. The Proton donor role is filled by H713. Residue C745 coordinates Zn(2+).

The protein belongs to the vitamin-B12 independent methionine synthase family. It depends on Zn(2+) as a cofactor.

It carries out the reaction 5-methyltetrahydropteroyltri-L-glutamate + L-homocysteine = tetrahydropteroyltri-L-glutamate + L-methionine. It participates in amino-acid biosynthesis; L-methionine biosynthesis via de novo pathway; L-methionine from L-homocysteine (MetE route): step 1/1. In terms of biological role, catalyzes the transfer of a methyl group from 5-methyltetrahydrofolate to homocysteine resulting in methionine formation. In Mesorhizobium japonicum (strain LMG 29417 / CECT 9101 / MAFF 303099) (Mesorhizobium loti (strain MAFF 303099)), this protein is 5-methyltetrahydropteroyltriglutamate--homocysteine methyltransferase.